Here is a 439-residue protein sequence, read N- to C-terminus: Divalent metal cation transporter MntH (439 aa).

The next 11 helical transmembrane spans lie at 32-52 (GASM…AYMD), 67-87 (GYAL…FQSL), 121-141 (IAAM…LSLL), 144-164 (MPLL…LLLE), 173-193 (LAIG…LFIT), 214-234 (ALLI…LFLH), 261-281 (VVVA…MAAG), 301-321 (APLL…ASGI), 350-370 (AVTM…TQAL), 371-391 (VLSQ…LLWF), and 406-426 (FIAV…AVLI).

This sequence belongs to the NRAMP family.

It localises to the cell inner membrane. Functionally, h(+)-stimulated, divalent metal cation uptake system. This chain is Divalent metal cation transporter MntH, found in Verminephrobacter eiseniae (strain EF01-2).